The following is a 1073-amino-acid chain: Carbamoyl phosphate synthase large chain (1073 aa).

The interval 2–403 (PKRTDIKSIL…SVQKALRGLE (402 aa)) is carboxyphosphate synthetic domain. ATP contacts are provided by R129, R169, G175, G176, E208, L210, E215, G241, V242, H243, Q285, and E299. The ATP-grasp 1 domain occupies 133–328 (DKAMKDIGLA…IAKIAAKLAV (196 aa)). Q285, E299, and N301 together coordinate Mg(2+). Mn(2+) is bound by residues Q285, E299, and N301. The segment at 404–553 (VGATGFDPKL…YSTYEEECEA (150 aa)) is oligomerization domain. A carbamoyl phosphate synthetic domain region spans residues 554-935 (NPSSREKIMI…AFAKAQLGAS (382 aa)). Positions 678 to 869 (QQMVQRLNLR…LAKVAARVMA (192 aa)) constitute an ATP-grasp 2 domain. Positions 714, 753, 755, 760, 785, 786, 787, 788, 828, and 840 each coordinate ATP. Positions 828, 840, and 842 each coordinate Mg(2+). Q828, E840, and N842 together coordinate Mn(2+). Residues 936–1073 (EILPTAGCAF…LQDLHAGIKA (138 aa)) enclose the MGS-like domain. Residues 936-1073 (EILPTAGCAF…LQDLHAGIKA (138 aa)) form an allosteric domain region.

This sequence belongs to the CarB family. In terms of assembly, composed of two chains; the small (or glutamine) chain promotes the hydrolysis of glutamine to ammonia, which is used by the large (or ammonia) chain to synthesize carbamoyl phosphate. Tetramer of heterodimers (alpha,beta)4. Mg(2+) is required as a cofactor. It depends on Mn(2+) as a cofactor.

The enzyme catalyses hydrogencarbonate + L-glutamine + 2 ATP + H2O = carbamoyl phosphate + L-glutamate + 2 ADP + phosphate + 2 H(+). The catalysed reaction is hydrogencarbonate + NH4(+) + 2 ATP = carbamoyl phosphate + 2 ADP + phosphate + 2 H(+). Its pathway is amino-acid biosynthesis; L-arginine biosynthesis; carbamoyl phosphate from bicarbonate: step 1/1. It participates in pyrimidine metabolism; UMP biosynthesis via de novo pathway; (S)-dihydroorotate from bicarbonate: step 1/3. In terms of biological role, large subunit of the glutamine-dependent carbamoyl phosphate synthetase (CPSase). CPSase catalyzes the formation of carbamoyl phosphate from the ammonia moiety of glutamine, carbonate, and phosphate donated by ATP, constituting the first step of 2 biosynthetic pathways, one leading to arginine and/or urea and the other to pyrimidine nucleotides. The large subunit (synthetase) binds the substrates ammonia (free or transferred from glutamine from the small subunit), hydrogencarbonate and ATP and carries out an ATP-coupled ligase reaction, activating hydrogencarbonate by forming carboxy phosphate which reacts with ammonia to form carbamoyl phosphate. In Pseudomonas aeruginosa (strain ATCC 15692 / DSM 22644 / CIP 104116 / JCM 14847 / LMG 12228 / 1C / PRS 101 / PAO1), this protein is Carbamoyl phosphate synthase large chain.